Here is a 146-residue protein sequence, read N- to C-terminus: Large ribosomal subunit protein uL15 (146 aa).

The tract at residues 1 to 58 (MRLHELHPAPGSRPRATRVGRGIGSGLGKTSGRGHKGQKARSGGGVRRGFEGGQMPLT) is disordered. The segment covering 21–31 (RGIGSGLGKTS) has biased composition (gly residues).

The protein belongs to the universal ribosomal protein uL15 family. In terms of assembly, part of the 50S ribosomal subunit.

Its function is as follows. Binds to the 23S rRNA. The chain is Large ribosomal subunit protein uL15 from Moorella thermoacetica (strain ATCC 39073 / JCM 9320).